A 199-amino-acid chain; its full sequence is V-type proton ATPase subunit E (199 aa).

This sequence belongs to the V-ATPase E subunit family.

In terms of biological role, produces ATP from ADP in the presence of a proton gradient across the membrane. This Clostridium botulinum (strain Loch Maree / Type A3) protein is V-type proton ATPase subunit E.